Consider the following 643-residue polypeptide: Extracellular metalloproteinase 4 (643 aa).

The N-terminal stretch at 1–18 is a signal peptide; it reads MHGLLLAGLLALPLNVLA. Residues 19–254 constitute a propeptide that is removed on maturation; the sequence is HPTESHSSGI…VHSVVDYVSA (236 aa). The span at 47 to 57 shows a compositional bias: basic and acidic residues; that stretch reads TKSDAVPKQDD. The tract at residues 47–71 is disordered; the sequence is TKSDAVPKQDDESFTTSSTGDDNVS. Residues 60–71 show a composition bias toward polar residues; the sequence is FTTSSTGDDNVS. 2 N-linked (GlcNAc...) asparagine glycosylation sites follow: Asn271 and Asn420. His437 is a Zn(2+) binding site. Glu438 is an active-site residue. His441 serves as a coordination point for Zn(2+). Asn510 is a glycosylation site (N-linked (GlcNAc...) asparagine).

The protein belongs to the peptidase M36 family. Requires Zn(2+) as cofactor.

The protein resides in the secreted. Functionally, secreted metalloproteinase probably acting as a virulence factor. This Trichophyton equinum (Horse ringworm fungus) protein is Extracellular metalloproteinase 4 (MEP4).